A 557-amino-acid chain; its full sequence is Formate--tetrahydrofolate ligase (557 aa).

67 to 74 contributes to the ATP binding site; it reads TPAGEGKS.

The protein belongs to the formate--tetrahydrofolate ligase family.

The enzyme catalyses (6S)-5,6,7,8-tetrahydrofolate + formate + ATP = (6R)-10-formyltetrahydrofolate + ADP + phosphate. It functions in the pathway one-carbon metabolism; tetrahydrofolate interconversion. In Lacticaseibacillus paracasei (strain ATCC 334 / BCRC 17002 / CCUG 31169 / CIP 107868 / KCTC 3260 / NRRL B-441) (Lactobacillus paracasei), this protein is Formate--tetrahydrofolate ligase.